Consider the following 477-residue polypeptide: MFKQILGKLPKKTSAKFWDNGESQTLDNNNNQGGGDEVLSQRTSSNGDTSLDCVSSFDVLPRLRDVSISEKQELFLKKLRLCCLVFDFVAEPQQNFKEKEIKRQTLLEVVDYVISSGNGKFPESVIQEATKMISANLFSNPHRQWKNKTPEALDLEEEEGSLNPSWPHLQIVYEFLLRIVASPNTDPKISKKYIDHTFVLKLLDLFDSEDPREREYLKTILHRIYGRFMVHRPFIRKTMNNILYDFIFETGKHSGIAEFLEVLGSIINGFALPLKEEHKLFLTRVLIPLHKLKCLPNYHQQLSYCVIQFVEKDCKLADTVIRGMLKYWPVTNSAKEIMFLNELEEILEATQLTEFERCMVPLSRQIAQCLSSSHFQVAERALYLWNNDHVTNLVRQNSRIILPIVFPALEKNGSSHWNQAVKNLTENVLKVLSDTNPDLFEECLHKFQEDQQKAEDTKKKNGETWRQLEEIVASMAK.

This sequence belongs to the phosphatase 2A regulatory subunit B56 family. PP2A consists of a common heteromeric enzyme, composed of a catalytic subunit (subunits C), a constant regulatory subunit (subunit A), and a variety of regulatory subunits such as subunits B (the R2/B/PR55/B55, R3/B''/PR72/PR130/PR59 and R5/B'/B56 families). Interacts with SRK2E/OST1. In terms of tissue distribution, expressed ubiquitously.

The protein resides in the cytoplasm. In terms of biological role, the B regulatory subunit may modulate substrate selectivity and catalytic activity, and may also direct the localization of the catalytic enzyme to a particular subcellular compartment. This is Serine/threonine protein phosphatase 2A 55 kDa regulatory subunit B' delta isoform (B'DELTA) from Arabidopsis thaliana (Mouse-ear cress).